Reading from the N-terminus, the 74-residue chain is Large ribosomal subunit protein uL29 (74 aa).

The protein belongs to the universal ribosomal protein uL29 family.

This Streptomyces griseus subsp. griseus (strain JCM 4626 / CBS 651.72 / NBRC 13350 / KCC S-0626 / ISP 5235) protein is Large ribosomal subunit protein uL29.